Here is an 860-residue protein sequence, read N- to C-terminus: Transforming growth factor-beta receptor-associated protein 1 (860 aa).

Positions 24–297 constitute a CNH domain; it reads RVNIECVECC…HILQDFEGRV (274 aa). A CHCR repeat occupies 564 to 728; sequence RPLDEQQKNS…LLAIYLHAGP (165 aa).

It belongs to the TRAP1 family. In terms of assembly, interacts with TGFBR2 and ACVR2B; in the absence of ligand stimulation. Interacts with TGFBR1, ACVRL1, BMPR1A and ACVR1B; in the absence of ligand stimulation and to a less extent. Interacts with SMAD4; the interaction seems to be mutually exclusive with the interaction of SMAD4 and phosphorylated SMAD2. May interact with ALOX5. Interacts with RAB5C. Interacts with VPS8, VPS11 and VPS16. Component of the putative class C core vacuole/endosome tethering (CORVET) complex; the core of which composed of the class C Vps proteins VPS11, VPS16, VPS18 and VPS33A, is associated with VPS8 and TGFBRAP1.

It localises to the cytoplasm. Its subcellular location is the early endosome. Plays a role in the TGF-beta/activin signaling pathway. It associates with inactive heteromeric TGF-beta and activin receptor complexes, mainly through the type II receptor, and is released upon activation of signaling. May recruit SMAD4 to the vicinity of the receptor complex and facilitate its interaction with receptor-regulated Smads, such as SMAD2. In terms of biological role, plays a role in vesicle-mediated protein trafficking of the endocytic membrane transport pathway. Believed to act as a component of the putative CORVET endosomal tethering complexes which is proposed to be involved in the Rab5-to-Rab7 endosome conversion probably implicating MON1A/B, and via binding SNAREs and SNARE complexes to mediate tethering and docking events during SNARE-mediated membrane fusion. The CORVET complex is proposed to function as a Rab5 effector to mediate early endosome fusion probably in specific endosome subpopulations. Functions predominantly in APPL1-containing endosomes and in degradative but not recycling trafficking of endocytosed cargo. This is Transforming growth factor-beta receptor-associated protein 1 (TGFBRAP1) from Homo sapiens (Human).